A 138-amino-acid chain; its full sequence is ATP synthase epsilon chain (138 aa).

The protein belongs to the ATPase epsilon chain family. F-type ATPases have 2 components, CF(1) - the catalytic core - and CF(0) - the membrane proton channel. CF(1) has five subunits: alpha(3), beta(3), gamma(1), delta(1), epsilon(1). CF(0) has three main subunits: a, b and c.

The protein resides in the cell inner membrane. Its function is as follows. Produces ATP from ADP in the presence of a proton gradient across the membrane. This Trichlorobacter lovleyi (strain ATCC BAA-1151 / DSM 17278 / SZ) (Geobacter lovleyi) protein is ATP synthase epsilon chain.